The following is a 306-amino-acid chain: Lymphotoxin-beta (306 aa).

Topologically, residues 1–27 (MGTRGLQGLGGRPQGRGCLLLAVAGAT) are cytoplasmic. A helical; Signal-anchor for type II membrane protein membrane pass occupies residues 28–48 (SLVTLLLAVPITVLAVLALVP). The Extracellular segment spans residues 49-306 (QDQGRRVEKI…KTFFGAVMVG (258 aa)). 2 disordered regions span residues 63 to 112 (AQAQ…GPVA) and 127 to 151 (PAADSTPDPGVQQLPKGEPETDLNP). Residues 74 to 85 (PSCILPSPSSLS) show a composition bias toward low complexity. Polar residues predominate over residues 95 to 112 (QRSNASRNLASTSQGPVA). N98 is a glycosylation site (N-linked (GlcNAc...) asparagine). Positions 154–305 (PAAHLIGAWM…GKTFFGAVMV (152 aa)) constitute a THD domain. A glycan (N-linked (GlcNAc...) asparagine) is linked at N284.

The protein belongs to the tumor necrosis factor family. Heterotrimer of either two LTB and one LTA subunits or (less prevalent) two LTA and one LTB subunits.

The protein resides in the membrane. Its function is as follows. Cytokine that binds to LTBR/TNFRSF3. May play a specific role in immune response regulation. Provides the membrane anchor for the attachment of the heterotrimeric complex to the cell surface. In Mus musculus (Mouse), this protein is Lymphotoxin-beta (Ltb).